A 212-amino-acid polypeptide reads, in one-letter code: Methylthioribulose-1-phosphate dehydratase (212 aa).

Zn(2+)-binding residues include His98 and His100.

It belongs to the aldolase class II family. MtnB subfamily. It depends on Zn(2+) as a cofactor.

The catalysed reaction is 5-(methylsulfanyl)-D-ribulose 1-phosphate = 5-methylsulfanyl-2,3-dioxopentyl phosphate + H2O. The protein operates within amino-acid biosynthesis; L-methionine biosynthesis via salvage pathway; L-methionine from S-methyl-5-thio-alpha-D-ribose 1-phosphate: step 2/6. Functionally, catalyzes the dehydration of methylthioribulose-1-phosphate (MTRu-1-P) into 2,3-diketo-5-methylthiopentyl-1-phosphate (DK-MTP-1-P). The polypeptide is Methylthioribulose-1-phosphate dehydratase (Picosynechococcus sp. (strain ATCC 27264 / PCC 7002 / PR-6) (Agmenellum quadruplicatum)).